A 632-amino-acid chain; its full sequence is Protein EAP1 (632 aa).

Disordered stretches follow at residues 1 to 80, 149 to 204, and 248 to 313; these read MELN…KKNK, MGPP…DDEE, and KSKG…PSLS. Polar residues-rich tracts occupy residues 7-38 and 54-69; these read SIIS…SNLF and VESS…ATSG. Position 30 is a phosphoserine (Ser30). Phosphoserine occurs at positions 281 and 282. Positions 288-298 are enriched in basic and acidic residues; that stretch reads NLKRQDKKEES. 2 positions are modified to phosphoserine: Ser327 and Ser344. A disordered region spans residues 347–378; it reads SLPSLDNNNQVPSSNVSVVNNDGNSTPHQSGS. Positions 353 to 371 are enriched in low complexity; sequence NNNQVPSSNVSVVNNDGNS. Ser387 is modified (phosphoserine). Disordered stretches follow at residues 429–541 and 587–632; these read QHPP…PPPP and QGNF…KNIK. 440-447 contacts ATP; the sequence is GLLNKGKS. A compositionally biased stretch (pro residues) spans 474–486; sequence PNFPQRMMPPPPG. The span at 492-505 shows a compositional bias: basic and acidic residues; that stretch reads KDSKDVNKKEDRQL. Polar residues-rich tracts occupy residues 507-516, 590-603, and 610-621; these read QNKNPNGTRN, FPPN…SNSP, and INANGKNVTNQL.

Interacts with SMY2, SYH1 and eIF4E.

The protein localises to the cytoplasm. In terms of biological role, can regulate translation through binding to eIF4E. Competes with eIF4G and p20 for binding to eIF4E in vivo and inhibits cap-dependent translation in vitro. Plays a role in cell growth and is implicated in the TOR signaling cascade. Functions independently of eIF4E to maintain genetic stability and to attenuate GCN4 translation upon TOR inactivation. In Saccharomyces cerevisiae (strain ATCC 204508 / S288c) (Baker's yeast), this protein is Protein EAP1 (EAP1).